Reading from the N-terminus, the 487-residue chain is UDP-N-acetylmuramate--L-alanine ligase (487 aa).

Residue 126–132 (GTHGKTT) participates in ATP binding.

The protein belongs to the MurCDEF family.

Its subcellular location is the cytoplasm. The enzyme catalyses UDP-N-acetyl-alpha-D-muramate + L-alanine + ATP = UDP-N-acetyl-alpha-D-muramoyl-L-alanine + ADP + phosphate + H(+). It functions in the pathway cell wall biogenesis; peptidoglycan biosynthesis. Functionally, cell wall formation. This is UDP-N-acetylmuramate--L-alanine ligase from Psychromonas ingrahamii (strain DSM 17664 / CCUG 51855 / 37).